Consider the following 571-residue polypeptide: Dihydroxy-acid dehydratase (571 aa).

Cysteine 56 contributes to the [2Fe-2S] cluster binding site. Mg(2+) is bound at residue aspartate 88. Cysteine 129 is a binding site for [2Fe-2S] cluster. 2 residues coordinate Mg(2+): aspartate 130 and lysine 131. Lysine 131 carries the N6-carboxylysine modification. Residue cysteine 201 participates in [2Fe-2S] cluster binding. Position 452 (glutamate 452) interacts with Mg(2+). Serine 478 serves as the catalytic Proton acceptor.

This sequence belongs to the IlvD/Edd family. Homodimer. [2Fe-2S] cluster serves as cofactor. Requires Mg(2+) as cofactor.

The catalysed reaction is (2R)-2,3-dihydroxy-3-methylbutanoate = 3-methyl-2-oxobutanoate + H2O. It carries out the reaction (2R,3R)-2,3-dihydroxy-3-methylpentanoate = (S)-3-methyl-2-oxopentanoate + H2O. It functions in the pathway amino-acid biosynthesis; L-isoleucine biosynthesis; L-isoleucine from 2-oxobutanoate: step 3/4. The protein operates within amino-acid biosynthesis; L-valine biosynthesis; L-valine from pyruvate: step 3/4. In terms of biological role, functions in the biosynthesis of branched-chain amino acids. Catalyzes the dehydration of (2R,3R)-2,3-dihydroxy-3-methylpentanoate (2,3-dihydroxy-3-methylvalerate) into 2-oxo-3-methylpentanoate (2-oxo-3-methylvalerate) and of (2R)-2,3-dihydroxy-3-methylbutanoate (2,3-dihydroxyisovalerate) into 2-oxo-3-methylbutanoate (2-oxoisovalerate), the penultimate precursor to L-isoleucine and L-valine, respectively. This is Dihydroxy-acid dehydratase from Streptococcus suis (strain 98HAH33).